The following is a 1523-amino-acid chain: Lysophospholipase nte1 (1523 aa).

Residues 1–66 (MADGVTLVDS…LPPVPTTMAG (66 aa)) lie on the Cytoplasmic side of the membrane. The chain crosses the membrane as a helical span at residues 67–87 (WIGWVFSFFFQVIPSVLYWVI). At 88–109 (TFSTITLPTWLFTLFSMSLTFT) the chain is on the lumenal side. Residues 110–130 (MNFTTLLLIVLAMVSTISWFI) traverse the membrane as a helical segment. Residues 131 to 1523 (RYRFLNMYSR…RTMAPRRASI (1393 aa)) are Cytoplasmic-facing. Disordered stretches follow at residues 309 to 384 (VPNS…KSVH) and 524 to 545 (RAATVVTPESAPAEHDTYGVSP). Residues 370–382 (ESRKHSSRKRRKS) are compositionally biased toward basic residues. Residues 681 to 800 (GGTS…GAVA) and 841 to 961 (RLTS…IAQR) each bind a nucleoside 3',5'-cyclic phosphate. The 165-residue stretch at 1220 to 1384 (LVLGGGGARG…IDNLTVDHMK (165 aa)) folds into the PNPLA domain. The GXGXXG motif lies at 1224–1229 (GGGARG). The GXSXG signature appears at 1251–1255 (GTSIG). Ser-1253 functions as the Nucleophile in the catalytic mechanism. The active-site Proton acceptor is the Asp-1371. The DGA/G motif lies at 1371 to 1373 (DGG). The tract at residues 1502-1523 (LPEETEEKKKLQRTMAPRRASI) is disordered.

The protein belongs to the NTE family.

It localises to the endoplasmic reticulum membrane. The catalysed reaction is a 1-acyl-sn-glycero-3-phosphocholine + H2O = sn-glycerol 3-phosphocholine + a fatty acid + H(+). Inhibited by organophosphorus esters. In terms of biological role, intracellular phospholipase B that catalyzes the double deacylation of phosphatidylcholine (PC) to glycerophosphocholine (GroPCho). Plays an important role in membrane lipid homeostasis. Responsible for the rapid PC turnover in response to inositol, elevated temperatures, or when choline is present in the growth medium. This Neosartorya fischeri (strain ATCC 1020 / DSM 3700 / CBS 544.65 / FGSC A1164 / JCM 1740 / NRRL 181 / WB 181) (Aspergillus fischerianus) protein is Lysophospholipase nte1 (nte1).